Reading from the N-terminus, the 865-residue chain is MSYTNKRHTYYGGFTNDLSDTFQYPQRTDEQRRKHVTFGPYILGSTLGEGEFGKVKLGWPKNFSNSSNSTFDFPKQVAIKLIKRDSISNDYRKEVKIYREINALKHLSHPNIVKLEEVLQNSRYIGIVLEYACGGEFYKYIQKKRRLKEMNACRLFSQLISGVHYIHSKGLVHRDLKLENLLLDKNENLVITDFGFVNEFCSRNELMKTSCGSPCYAAPELVISAEPYEARKADIWSCGVILYAILAGYLPWDDDPNNPEGSDIGRLYNYINSTPLKFPDYILPIPRDLLRRMLVSDPKKRINLKQIKKHEWLKPHSSFLSITPDEWDKLNNTQSVFRLAKPRRRYGSRPQSSCSTSSLGSRSDKRDSLVIDSTLITFPAPPQESQNHIITRPASIASDQRLSPIRRSNRHNRSNSAASVALQAVVNADREYVLSHEQSLSPVQNIRQTTGNMTASLSPPPAISPGDIIIETTPIKRNTISGSSIVPSLEEESSTTMQTSKIQPNNMASSQNHQYNKNKTQNSLQSAKNFYRTSSSSHTKPRPTSYHPGSYTTPPYNSNTLSIYEINEKAKSSASSQTLNQRDTSPFDSTPYLALDTCITSSSSIESSPKLITHGQFSVAKPSVDLQSVSGDLIKYKRDADVVTRIYDEKYKQKRKSLRYSGIFSDISCDTVTEESDELRPPESPLQQHEGQESIDKAKTEDTSEKGSKSSNIAKATAQKHVNNHLERSLNEAESTKKRFSFLSLYSYDTSKSSLYSSMDSKRKPSPPSQRRPKKDDSYQTNSKNHYITASNMQTSHQVSKDLPAPTMVQNKCTLETKKAVRSNRSSIMVSEVNKASVDNKAAQSPEHSTAKRVLGFFKRRSMKI.

The Protein kinase domain maps to Tyr-41–Leu-313. ATP-binding positions include Leu-47–Val-55 and Lys-80. The active-site Proton acceptor is the Asp-175. The segment at Lys-341–Ser-398 is disordered. A compositionally biased stretch (low complexity) spans Ser-352–Ser-361. Ser-441 carries the phosphoserine modification. Disordered regions lie at residues Ile-480–Pro-554, Thr-673–Ala-733, and Ser-754–Asn-782. Polar residues predominate over residues Ser-494–His-538. 2 stretches are compositionally biased toward basic and acidic residues: residues Glu-690 to Ser-708 and Asn-724 to Ala-733.

The protein belongs to the protein kinase superfamily. Ser/Thr protein kinase family. In terms of assembly, interacts with FAA3, POL5 and TPA1.

It localises to the cytoplasm. It carries out the reaction L-seryl-[protein] + ATP = O-phospho-L-seryl-[protein] + ADP + H(+). The catalysed reaction is L-threonyl-[protein] + ATP = O-phospho-L-threonyl-[protein] + ADP + H(+). Putative serine/threonine-protein kinase that may be involved in rRNA transcription and ribosome biogenesis. The sequence is that of Fatty acyl-CoA synthetase and RNA processing-associated kinase 1 (FRK1) from Saccharomyces cerevisiae (strain ATCC 204508 / S288c) (Baker's yeast).